A 294-amino-acid polypeptide reads, in one-letter code: Elongation factor Ts (294 aa).

The interval 80–83 is involved in Mg(2+) ion dislocation from EF-Tu; sequence TDFV.

It belongs to the EF-Ts family.

Its subcellular location is the cytoplasm. Its function is as follows. Associates with the EF-Tu.GDP complex and induces the exchange of GDP to GTP. It remains bound to the aminoacyl-tRNA.EF-Tu.GTP complex up to the GTP hydrolysis stage on the ribosome. The chain is Elongation factor Ts from Listeria monocytogenes serovar 1/2a (strain ATCC BAA-679 / EGD-e).